A 475-amino-acid polypeptide reads, in one-letter code: uncharacterized protein (475 aa).

A helical transmembrane segment spans residues 19-39 (IKVGVFFVAILLILTGILLTI). Disordered stretches follow at residues 55–79 (GEYH…NATS) and 330–350 (SSPF…PHKG). Positions 60 to 79 (LNTSPNENSTALQPDENATS) are enriched in polar residues. The span at 336 to 348 (NRRHPVTGRIRPH) shows a compositional bias: basic residues. Zn(2+) is bound at residue histidine 348.

This sequence in the central section; belongs to the OapA family. The protein in the C-terminal section; belongs to the peptidase M23B family. Zn(2+) is required as a cofactor.

The protein resides in the cell membrane. This is an uncharacterized protein from Haemophilus influenzae (strain ATCC 51907 / DSM 11121 / KW20 / Rd).